A 662-amino-acid chain; its full sequence is Glycogen debranching enzyme (662 aa).

The active-site Nucleophile is Asp-338. Glu-373 functions as the Proton donor in the catalytic mechanism.

Belongs to the glycosyl hydrolase 13 family.

The enzyme catalyses Hydrolysis of (1-&gt;6)-alpha-D-glucosidic linkages to branches with degrees of polymerization of three or four glucose residues in limit dextrin.. The protein operates within glycan degradation; glycogen degradation. Removes maltotriose and maltotetraose chains that are attached by 1,6-alpha-linkage to the limit dextrin main chain, generating a debranched limit dextrin. This chain is Glycogen debranching enzyme, found in Yersinia pseudotuberculosis serotype I (strain IP32953).